A 173-amino-acid polypeptide reads, in one-letter code: MVQDAFSKVVSQADARGEYLSDGQLDALINLVKEGNKRVDVVNRISSNASSIVRNAARSLFAEQPQLIAPGGNAYTSRRAAACVRDLEIILRYVTYAIFAGDASVLDDRALNGLRETYLALGTPGASVAVGIQKLKESSIAIANDPNGITRGDCSSLIAEVSGYFDRAAAAVA.

Asparagine 73 carries the N4-methylasparagine modification. 2 residues coordinate (2R,3E)-phycocyanobilin: cysteine 83 and cysteine 154.

Belongs to the phycobiliprotein family. In terms of assembly, heterodimer of an alpha and a beta subunit, which further assembles into trimers and the trimers into hexamers. In terms of processing, contains two covalently linked bilin chromophores.

It is found in the cellular thylakoid membrane. Functionally, light-harvesting photosynthetic bile pigment-protein from the phycobiliprotein complex (phycobilisome, PBS). Phycocyanin is the major phycobiliprotein in the PBS rod. This chain is C-phycocyanin-3 beta subunit (cpcB3), found in Microchaete diplosiphon (Fremyella diplosiphon).